The following is a 562-amino-acid chain: NAD-dependent histone deacetylase SIR2 (562 aa).

The segment at 1-67 (MTIPHMKYAV…RETNTTDPLG (67 aa)) is disordered. Residues 11-25 (SKTSENKVSNTVSPT) are compositionally biased toward polar residues. The segment covering 26–36 (QDKDAIRKQPD) has biased composition (basic and acidic residues). Residues 237 to 527 (RLSNFFTIDH…AMVAQKCGWT (291 aa)) form the Deacetylase sirtuin-type domain. NAD(+) contacts are provided by residues 262–281 (GAGV…EGFY) and 344–347 (QNID). The active-site Proton acceptor is the His-364. Positions 372, 375, 396, and 399 each coordinate Zn(2+). NAD(+) contacts are provided by residues 471–473 (GTS), 496–498 (NRD), and Cys-513.

Belongs to the sirtuin family. Class I subfamily. Homomultimer. Forms a complex with SIR3 and SIR4. Component of the RENT complex, at least composed of SIR2, CDC14 and NET1. The RENT complex interacts with FOB1. Interacts with ESC8. Interacts with and ZDS2. Interacts with MCM10. Interacts with SLX5. Interacts with NSI1. Requires Zn(2+) as cofactor.

Its subcellular location is the nucleus. The protein resides in the nucleolus. It carries out the reaction N(6)-acetyl-L-lysyl-[protein] + NAD(+) + H2O = 2''-O-acetyl-ADP-D-ribose + nicotinamide + L-lysyl-[protein]. Its activity is regulated as follows. Its activity is increased by calorie restriction, which slows the pace of aging and increases maximum lifespan. Activated by resveratrol (3,5,4'-trihydroxy-trans-stilbene), which is found in red wine. In terms of biological role, NAD-dependent deacetylase, which participates in a wide range of cellular events including chromosome silencing, chromosome segregation, DNA recombination and the determination of life span. Involved in transcriptional repression of the silent mating-type loci HML and HMR and telomeric silencing via its association with SIR3 and SIR4. Plays a central role in ribosomal DNA (rDNA) silencing via its association with the RENT complex, preventing hyperrecombination, and repressing transcription from foreign promoters, which contributes to extending life span. Probably represses transcription via the formation of heterochromatin structure, which involves the compaction of chromatin fiber into a more condensed form, although this complex in at least one case can still bind euchromatic levels of positive transcription regulators. Although it displays some NAD-dependent histone deacetylase activity on histone H3K9Ac and H3K14Ac and histone H4K16Ac in vitro, such activity is unclear in vivo and may not be essential. This is NAD-dependent histone deacetylase SIR2 (SIR2) from Saccharomyces cerevisiae (strain ATCC 204508 / S288c) (Baker's yeast).